A 33-amino-acid chain; its full sequence is Gastrin (33 aa).

Gln-1 is modified (pyrrolidone carboxylic acid). Residue Phe-33 is modified to Phenylalanine amide.

Belongs to the gastrin/cholecystokinin family.

The protein resides in the secreted. Its function is as follows. Gastrin stimulates the stomach mucosa to produce and secrete hydrochloric acid and the pancreas to secrete its digestive enzymes. It also stimulates smooth muscle contraction and increases blood circulation and water secretion in the stomach and intestine. This Cavia porcellus (Guinea pig) protein is Gastrin (GAST).